Reading from the N-terminus, the 148-residue chain is Trypsin inhibitor CMe (148 aa).

Residues 1-24 (MAFKYQLLLSAAVMLAILVATATS) form the signal peptide.

Belongs to the protease inhibitor I6 (cereal trypsin/alpha-amylase inhibitor) family. Five disulfide bonds, which are essential for the inhibitor activity, are probably present. As to expression, expressed in the developing endosperm. Not detected in embryo, aleurone, coleoptile, roots and leaves.

It is found in the secreted. In terms of biological role, inhibits trypsin in vitro. Probably plays a protective role through inhibition of insect midgut proteases. The chain is Trypsin inhibitor CMe (ITR1) from Hordeum vulgare (Barley).